Reading from the N-terminus, the 300-residue chain is MTMFKTTFRQTATIAVSLISLLVSPMLWANTNNTIEEQLSTLEKYSQGRLGVALINTEDNSQITYRGEERFAMASTSKVMAVAAVLKESEKQAGLLDKNITIKKSDLVAYSPITEKHLVTGMSLAQLSAATLQYSDNTAMNKILDYLGGPAKVTQFARSINDVTYRLDRKEPELNTAIHGDPRDTTSPIAMAKSLQALTLGDALGQSQRQQLVTWLKGNTTGDHSIKAGLPKHWIVGDKTGSGDYGTTNDIAVIWPKNHAPLILVVYFTQQEQDAKYRKDIIVKATEIVTKEISNSPQTK.

The first 29 residues, 1-29 (MTMFKTTFRQTATIAVSLISLLVSPMLWA), serve as a signal peptide directing secretion. The active-site Acyl-ester intermediate is Ser-75. 239–241 (KTG) contacts substrate.

The protein belongs to the class-A beta-lactamase family. Monomer.

The catalysed reaction is a beta-lactam + H2O = a substituted beta-amino acid. Functionally, hydrolyzes broad-spectrum beta-lactam antibiotics. Active against cephalosporins such as cefuroxime and cefotaxime. This is Beta-lactamase (blaB) from Proteus vulgaris.